A 758-amino-acid chain; its full sequence is Translation initiation factor IF-2 (758 aa).

A disordered region spans residues 55 to 168 (EKNVGKQATQ…KTHQPSIPVK (114 aa)). Polar residues-rich tracts occupy residues 60–78 (KQAT…QQNH) and 86–95 (QRQQSATSKP). Residues 96–136 (KVNNQQHSNSSNEKSKNTKGNQNRNMTQNNNNNNNNNNNNR) show a composition bias toward low complexity. The tr-type G domain maps to 259-428 (ERPPVVTIMG…LLVAEVGELK (170 aa)). The G1 stretch occupies residues 268–275 (GHVDHGKT). 268–275 (GHVDHGKT) is a GTP binding site. The G2 stretch occupies residues 293 to 297 (GITQH). Positions 314-317 (DTPG) are G3. GTP contacts are provided by residues 314-318 (DTPGH) and 368-371 (NKMD). Residues 368 to 371 (NKMD) are G4. The G5 stretch occupies residues 404–406 (SAL).

It belongs to the TRAFAC class translation factor GTPase superfamily. Classic translation factor GTPase family. IF-2 subfamily.

It localises to the cytoplasm. One of the essential components for the initiation of protein synthesis. Protects formylmethionyl-tRNA from spontaneous hydrolysis and promotes its binding to the 30S ribosomal subunits. Also involved in the hydrolysis of GTP during the formation of the 70S ribosomal complex. This chain is Translation initiation factor IF-2, found in Lysinibacillus sphaericus (strain C3-41).